Reading from the N-terminus, the 165-residue chain is Large ribosomal subunit protein uL22c (165 aa).

The protein belongs to the universal ribosomal protein uL22 family. As to quaternary structure, part of the 50S ribosomal subunit.

Its subcellular location is the plastid. It is found in the chloroplast. This protein binds specifically to 23S rRNA. Functionally, the globular domain of the protein is located near the polypeptide exit tunnel on the outside of the subunit, while an extended beta-hairpin is found that lines the wall of the exit tunnel in the center of the 70S ribosome. In Daucus carota (Wild carrot), this protein is Large ribosomal subunit protein uL22c (rpl22).